A 418-amino-acid chain; its full sequence is Nickel and cobalt resistance protein CnrC (418 aa).

Positions 1–29 (MKQVISSFLCRPRFVGSAIWLLPVALSHA) are cleaved as a signal peptide.

The protein belongs to the outer membrane factor (OMF) (TC 1.B.17) family.

The products of the genes cnrA, cnrB, and cnrC are likely to form a membrane-bound protein complex catalyzing an energy-dependent efflux of Ni(2+) and Co(2+). The mechanism of action of the CnrCBA complex may be that of a proton/cation antiporter. This Cupriavidus metallidurans (strain ATCC 43123 / DSM 2839 / NBRC 102507 / CH34) (Ralstonia metallidurans) protein is Nickel and cobalt resistance protein CnrC (cnrC).